The chain runs to 200 residues: Imidazoleglycerol-phosphate dehydratase (200 aa).

This sequence belongs to the imidazoleglycerol-phosphate dehydratase family.

The protein localises to the cytoplasm. The catalysed reaction is D-erythro-1-(imidazol-4-yl)glycerol 3-phosphate = 3-(imidazol-4-yl)-2-oxopropyl phosphate + H2O. Its pathway is amino-acid biosynthesis; L-histidine biosynthesis; L-histidine from 5-phospho-alpha-D-ribose 1-diphosphate: step 6/9. This chain is Imidazoleglycerol-phosphate dehydratase, found in Chlorobium limicola (strain DSM 245 / NBRC 103803 / 6330).